We begin with the raw amino-acid sequence, 182 residues long: Large ribosomal subunit protein uL5 (182 aa).

Belongs to the universal ribosomal protein uL5 family. Part of the 50S ribosomal subunit; part of the 5S rRNA/L5/L18/L25 subcomplex. Contacts the 5S rRNA and the P site tRNA. Forms a bridge to the 30S subunit in the 70S ribosome.

This is one of the proteins that bind and probably mediate the attachment of the 5S RNA into the large ribosomal subunit, where it forms part of the central protuberance. In the 70S ribosome it contacts protein S13 of the 30S subunit (bridge B1b), connecting the 2 subunits; this bridge is implicated in subunit movement. Contacts the P site tRNA; the 5S rRNA and some of its associated proteins might help stabilize positioning of ribosome-bound tRNAs. The polypeptide is Large ribosomal subunit protein uL5 (Borreliella burgdorferi (strain ATCC 35210 / DSM 4680 / CIP 102532 / B31) (Borrelia burgdorferi)).